We begin with the raw amino-acid sequence, 315 residues long: Methionyl-tRNA formyltransferase (315 aa).

Position 113 to 116 (113 to 116 (SLLP)) interacts with (6S)-5,6,7,8-tetrahydrofolate.

The protein belongs to the Fmt family.

The catalysed reaction is L-methionyl-tRNA(fMet) + (6R)-10-formyltetrahydrofolate = N-formyl-L-methionyl-tRNA(fMet) + (6S)-5,6,7,8-tetrahydrofolate + H(+). Functionally, attaches a formyl group to the free amino group of methionyl-tRNA(fMet). The formyl group appears to play a dual role in the initiator identity of N-formylmethionyl-tRNA by promoting its recognition by IF2 and preventing the misappropriation of this tRNA by the elongation apparatus. This chain is Methionyl-tRNA formyltransferase, found in Shigella flexneri serotype 5b (strain 8401).